The following is a 612-amino-acid chain: Dihydroxy-acid dehydratase (612 aa).

Asp81 serves as a coordination point for Mg(2+). Cys122 serves as a coordination point for [2Fe-2S] cluster. 2 residues coordinate Mg(2+): Asp123 and Lys124. Lys124 carries the post-translational modification N6-carboxylysine. Cys195 lines the [2Fe-2S] cluster pocket. Position 491 (Glu491) interacts with Mg(2+). The Proton acceptor role is filled by Ser517.

It belongs to the IlvD/Edd family. Homodimer. It depends on [2Fe-2S] cluster as a cofactor. Requires Mg(2+) as cofactor.

The catalysed reaction is (2R)-2,3-dihydroxy-3-methylbutanoate = 3-methyl-2-oxobutanoate + H2O. It catalyses the reaction (2R,3R)-2,3-dihydroxy-3-methylpentanoate = (S)-3-methyl-2-oxopentanoate + H2O. It participates in amino-acid biosynthesis; L-isoleucine biosynthesis; L-isoleucine from 2-oxobutanoate: step 3/4. The protein operates within amino-acid biosynthesis; L-valine biosynthesis; L-valine from pyruvate: step 3/4. In terms of biological role, functions in the biosynthesis of branched-chain amino acids. Catalyzes the dehydration of (2R,3R)-2,3-dihydroxy-3-methylpentanoate (2,3-dihydroxy-3-methylvalerate) into 2-oxo-3-methylpentanoate (2-oxo-3-methylvalerate) and of (2R)-2,3-dihydroxy-3-methylbutanoate (2,3-dihydroxyisovalerate) into 2-oxo-3-methylbutanoate (2-oxoisovalerate), the penultimate precursor to L-isoleucine and L-valine, respectively. This Sinorhizobium medicae (strain WSM419) (Ensifer medicae) protein is Dihydroxy-acid dehydratase.